A 422-amino-acid chain; its full sequence is Putative acid phosphatase 5 (422 aa).

An N-terminal signal peptide occupies residues 1–13 (MLLLLVLLIGASG). The active-site Nucleophile is the His40. Residues Asn104, Asn210, and Asn218 are each glycosylated (N-linked (GlcNAc...) asparagine). 3 disulfides stabilise this stretch: Cys152-Cys363, Cys205-Cys302, and Cys338-Cys342. Asp279 serves as the catalytic Proton donor. 2 N-linked (GlcNAc...) asparagine glycosylation sites follow: Asn312 and Asn323.

This sequence belongs to the histidine acid phosphatase family.

It catalyses the reaction a phosphate monoester + H2O = an alcohol + phosphate. The protein is Putative acid phosphatase 5 (pho-5) of Caenorhabditis elegans.